A 168-amino-acid chain; its full sequence is Small ribosomal subunit protein uS9 (168 aa).

The segment covering 1–15 (MAQNEETTEAVEAEE) has biased composition (acidic residues). The tract at residues 1–34 (MAQNEETTEAVEAEETLTSYTSESGAAEAAAPKK) is disordered.

The protein belongs to the universal ribosomal protein uS9 family.

This Arthrobacter sp. (strain FB24) protein is Small ribosomal subunit protein uS9.